The following is a 244-amino-acid chain: MLMSTSPSPWLAAAMLCIGLANAHTVIVYPGYRGNNLHTTGTVEGADGLGIAWSSDNETLIYPYGMQWSYPCGGMPTSENRTKWPVQGGAVSFQPGWFQGHSRAQIYINIGLGTVPPNMSHPMITPFEIVGPDNDPYPGTICLPQVRLPAGIEVQVGDNATIQVIELAQHGAALYNCADITFAEPEDVAEVNSTNCFNSSHISFETIFTTSSLENAGLEAVTVPSFLTAVVPTFLGIAYGLLMA.

A signal peptide spans 1–23 (MLMSTSPSPWLAAAMLCIGLANA). His-24 lines the Cu(2+) pocket. A Methylhistidine modification is found at His-24. N-linked (GlcNAc...) asparagine glycans are attached at residues Asn-57, Asn-80, Asn-118, Asn-159, Asn-192, and Asn-198. Intrachain disulfides connect Cys-72/Cys-177 and Cys-142/Cys-196. A lipid anchor (GPI-anchor amidated asparagine) is attached at Asn-215. A propeptide spans 216–244 (AGLEAVTVPSFLTAVVPTFLGIAYGLLMA) (removed in mature form).

Belongs to the X325 family. It depends on Cu(2+) as a cofactor. Post-translationally, the catalytically essential N-terminal histidine His-24 is post-translationally modified by methylation to prevent protonation of the histidine side chain, and protect the critical active site of the enzyme from oxidative damage.

Its subcellular location is the cell membrane. Functionally, lytic polysaccharide monooxygenase-like protein that has diverged to biological functions other than polysaccharide degradation since it does not perform oxidative cleavage of polysaccharides. Acts as a cell surface-bound protein that functions in the copper-accumulation pathway. May also act as the major cell wall sensor that regulates MAP kinase-dependent hyphal anastomosis, the fusion of hyphal cells. The sequence is that of Lytic polysaccharide monooxygenase-like protein ANIA_04702 from Emericella nidulans (strain FGSC A4 / ATCC 38163 / CBS 112.46 / NRRL 194 / M139) (Aspergillus nidulans).